A 245-amino-acid chain; its full sequence is UPF0246 protein LBUL_1917 (245 aa).

The protein belongs to the UPF0246 family.

In Lactobacillus delbrueckii subsp. bulgaricus (strain ATCC BAA-365 / Lb-18), this protein is UPF0246 protein LBUL_1917.